We begin with the raw amino-acid sequence, 458 residues long: Transcription factor PCF5 (458 aa).

Disordered regions lie at residues 1-103 (MGDA…RGPR), 159-182 (GAGA…ENSD), 278-299 (MFHH…TTQQ), and 424-458 (RLPA…ASHH). Gly residues predominate over residues 65–74 (RGGGGGGGGE). One can recognise a TCP domain in the interval 89–147 (RKDRHSKVCTARGPRDRRVRLSAHTAIQFYDVQDRLGYDRPSKAVDWLIKNAKDAIDKL).

Forms homodimers and heterodimers.

It localises to the nucleus. Transcription activator. Binds the promoter core sequence 5'-GGNCC-3'. The chain is Transcription factor PCF5 (PCF5) from Oryza sativa subsp. japonica (Rice).